The sequence spans 136 residues: Ribonuclease P protein component (136 aa).

Belongs to the RnpA family. As to quaternary structure, consists of a catalytic RNA component (M1 or rnpB) and a protein subunit.

It carries out the reaction Endonucleolytic cleavage of RNA, removing 5'-extranucleotides from tRNA precursor.. Its function is as follows. RNaseP catalyzes the removal of the 5'-leader sequence from pre-tRNA to produce the mature 5'-terminus. It can also cleave other RNA substrates such as 4.5S RNA. The protein component plays an auxiliary but essential role in vivo by binding to the 5'-leader sequence and broadening the substrate specificity of the ribozyme. This Burkholderia pseudomallei (strain 1106a) protein is Ribonuclease P protein component.